The primary structure comprises 470 residues: Neuraminidase (470 aa).

The Intravirion segment spans residues 1-14; sequence MNPNQKIITIGSIS. Residues 11-32 are involved in apical transport and lipid raft association; that stretch reads GSISLGLVVFNVLLHVVSIIVT. The chain crosses the membrane as a helical span at residues 15-35; it reads LGLVVFNVLLHVVSIIVTVLV. The hypervariable stalk region stretch occupies residues 32–86; that stretch reads TVLVLGRGGNNGICNETVVREYNETVRIEKVTQWHNTSVVEYVPYWNEGTYMNNT. The Virion surface portion of the chain corresponds to 36 to 470; sequence LGRGGNNGIC…AILPFDIDKM (435 aa). N-linked (GlcNAc...) asparagine; by host glycans are attached at residues Asn46, Asn54, Asn67, and Asn84. The tract at residues 89–470 is head of neuraminidase; the sequence is ICDVKGFAPF…AILPFDIDKM (382 aa). 8 disulfide bridges follow: Cys90/Cys417, Cys122/Cys127, Cys182/Cys229, Cys231/Cys236, Cys277/Cys290, Cys279/Cys288, Cys316/Cys335, and Cys421/Cys446. Residue Arg116 coordinates substrate. N-linked (GlcNAc...) asparagine; by host glycosylation is present at Asn144. Asp149 functions as the Proton donor/acceptor in the catalytic mechanism. Arg150 contributes to the substrate binding site. 275–276 contributes to the substrate binding site; the sequence is EE. A substrate-binding site is contributed by Arg291. Ca(2+) is bound at residue Asp292. Asn293 carries an N-linked (GlcNAc...) asparagine; by host glycan. Ca(2+) is bound by residues Gly296 and Asp322. Arg368 contacts substrate. The N-linked (GlcNAc...) asparagine; by host glycan is linked to Asn398. Residue Tyr402 is the Nucleophile of the active site.

Belongs to the glycosyl hydrolase 34 family. Homotetramer. Requires Ca(2+) as cofactor. In terms of processing, N-glycosylated.

It localises to the virion membrane. Its subcellular location is the host apical cell membrane. The catalysed reaction is Hydrolysis of alpha-(2-&gt;3)-, alpha-(2-&gt;6)-, alpha-(2-&gt;8)- glycosidic linkages of terminal sialic acid residues in oligosaccharides, glycoproteins, glycolipids, colominic acid and synthetic substrates.. Inhibited by the neuraminidase inhibitors zanamivir (Relenza) and oseltamivir (Tamiflu). These drugs interfere with the release of progeny virus from infected cells and are effective against all influenza strains. Resistance to neuraminidase inhibitors is quite rare. Catalyzes the removal of terminal sialic acid residues from viral and cellular glycoconjugates. Cleaves off the terminal sialic acids on the glycosylated HA during virus budding to facilitate virus release. Additionally helps virus spread through the circulation by further removing sialic acids from the cell surface. These cleavages prevent self-aggregation and ensure the efficient spread of the progeny virus from cell to cell. Otherwise, infection would be limited to one round of replication. Described as a receptor-destroying enzyme because it cleaves a terminal sialic acid from the cellular receptors. May facilitate viral invasion of the upper airways by cleaving the sialic acid moieties on the mucin of the airway epithelial cells. Likely to plays a role in the budding process through its association with lipid rafts during intracellular transport. May additionally display a raft-association independent effect on budding. Plays a role in the determination of host range restriction on replication and virulence. Sialidase activity in late endosome/lysosome traffic seems to enhance virus replication. This chain is Neuraminidase, found in Aves (Horse).